The following is a 103-amino-acid chain: Large ribosomal subunit protein bL21 (103 aa).

It belongs to the bacterial ribosomal protein bL21 family. In terms of assembly, part of the 50S ribosomal subunit. Contacts protein L20.

Functionally, this protein binds to 23S rRNA in the presence of protein L20. This is Large ribosomal subunit protein bL21 from Amoebophilus asiaticus (strain 5a2).